Reading from the N-terminus, the 499-residue chain is Lysine--tRNA ligase (499 aa).

The Mg(2+) site is built by glutamate 408 and glutamate 415.

This sequence belongs to the class-II aminoacyl-tRNA synthetase family. In terms of assembly, homodimer. Mg(2+) serves as cofactor.

The protein resides in the cytoplasm. The catalysed reaction is tRNA(Lys) + L-lysine + ATP = L-lysyl-tRNA(Lys) + AMP + diphosphate. This chain is Lysine--tRNA ligase, found in Bacillus cereus (strain G9842).